A 650-amino-acid polypeptide reads, in one-letter code: Growth hormone receptor (650 aa).

A signal peptide spans 1–24 (MDLCQVFLTLALAVTSSTFSGSEA). Residues 25–273 (TPATLGKASP…ILEACEEDIQ (249 aa)) are Extracellular-facing. 2 disulfide bridges follow: C56–C66 and C109–C120. An N-linked (GlcNAc...) asparagine glycan is attached at N123. A disulfide bridge links C134 with C148. One can recognise a Fibronectin type-III domain in the interval 159-262 (PPIGLNWTLL…EVLRVIFPQT (104 aa)). N164, N169, and N208 each carry an N-linked (GlcNAc...) asparagine glycan. The WSXWS motif signature appears at 248 to 252 (YSEFS). The chain crosses the membrane as a helical span at residues 274–297 (FPWFLIIIFGIFGVAVMLFVVIFS). Residues 298–650 (KQQRIKMLIL…STDQLNKIMQ (353 aa)) lie on the Cytoplasmic side of the membrane. The segment at 303 to 390 (KMLILPPVPV…HEKSAGILGA (88 aa)) is required for JAK2 binding. The short motif at 306–314 (ILPPVPVPK) is the Box 1 motif element. Positions 349-358 (DSWVEFIELD) match the UbE motif motif. S350 bears the Phosphoserine mark. The disordered stretch occupies residues 466–486 (KPQPLLSSETEATHQLASTPM). The segment covering 470 to 486 (LLSSETEATHQLASTPM) has biased composition (polar residues). Residues Y498 and Y606 each carry the phosphotyrosine modification.

This sequence belongs to the type I cytokine receptor family. Type 1 subfamily. As to quaternary structure, on growth hormone (GH) binding, forms homodimers and binds JAK2 via a box 1-containing domain. Post-translationally, the soluble form (GHBP) is produced by phorbol ester-promoted proteolytic cleavage at the cell surface (shedding) by ADAM17/TACE. Shedding is inhibited by growth hormone (GH) binding to the receptor probably due to a conformational change in GHR rendering the receptor inaccessible to ADAM17. On GH binding, phosphorylated on tyrosine residues in the cytoplasmic domain by JAK2. In terms of processing, ubiquitinated by the ECS(SOCS2) complex following ligand-binding and phosphorylation by JAK2, leading to its degradation by the proteasome. Regulation by the ECS(SOCS2) complex acts as a negative feedback loop of growth hormone receptor signaling. Ubiquitination is not sufficient for GHR internalization. In terms of tissue distribution, expressed in all tissues tested including, liver, heart, adipose tissue, mammary gland, testes, ovary, brain, kidney and muscle. Highest levels in liver.

The protein resides in the cell membrane. The protein localises to the secreted. In terms of biological role, receptor for pituitary gland growth hormone (GH1) involved in regulating postnatal body growth. On ligand binding, couples to the JAK2/STAT5 pathway. The soluble form (GHBP) acts as a reservoir of growth hormone in plasma and may be a modulator/inhibitor of GH signaling. This Mus musculus (Mouse) protein is Growth hormone receptor (Ghr).